The following is a 368-amino-acid chain: Biotin synthase (368 aa).

In terms of domain architecture, Radical SAM core spans 46–277 (VHGDEVALCG…AAHIFVMGGR (232 aa)). Residues C64, C68, and C71 each contribute to the [4Fe-4S] cluster site. S109, C142, and C202 together coordinate [2Fe-2S] cluster. A disordered region spans residues 347-368 (RAAEPGGKRGLPVVGPPRGGCA).

Belongs to the radical SAM superfamily. Biotin synthase family. In terms of assembly, homodimer. [4Fe-4S] cluster serves as cofactor. It depends on [2Fe-2S] cluster as a cofactor.

The enzyme catalyses (4R,5S)-dethiobiotin + (sulfur carrier)-SH + 2 reduced [2Fe-2S]-[ferredoxin] + 2 S-adenosyl-L-methionine = (sulfur carrier)-H + biotin + 2 5'-deoxyadenosine + 2 L-methionine + 2 oxidized [2Fe-2S]-[ferredoxin]. It participates in cofactor biosynthesis; biotin biosynthesis; biotin from 7,8-diaminononanoate: step 2/2. Catalyzes the conversion of dethiobiotin (DTB) to biotin by the insertion of a sulfur atom into dethiobiotin via a radical-based mechanism. The chain is Biotin synthase from Anaeromyxobacter sp. (strain Fw109-5).